A 119-amino-acid chain; its full sequence is Ubiquinone biosynthesis accessory factor UbiK (119 aa).

The stretch at 79-99 (LLRTREKLALLEQRLSELEAR) forms a coiled coil. Residues 96-106 (LEARDKPEEVK) are compositionally biased toward basic and acidic residues. Residues 96-119 (LEARDKPEEVKPAPAIPPVDPQQE) are disordered. Residues 109 to 119 (PAIPPVDPQQE) show a composition bias toward pro residues.

It belongs to the UbiK family. As to quaternary structure, homotrimer.

Its subcellular location is the cytoplasm. The protein operates within cofactor biosynthesis; ubiquinone biosynthesis. Required for efficient ubiquinone (coenzyme Q) biosynthesis under aerobic conditions. UbiK is probably an accessory factor of Ubi enzymes and facilitates ubiquinone biosynthesis by acting as an assembly factor, a targeting factor, or both. Dispensable for ubiquinone biosynthesis under anaerobiosis. Required for proliferation in macrophages and virulence in mice. Significantly contributes to colonization and invasion as well as host inflammation and innate immunity after infection. In vitro, has membrane fusogenic activity at acidic pH. This chain is Ubiquinone biosynthesis accessory factor UbiK, found in Salmonella typhimurium (strain LT2 / SGSC1412 / ATCC 700720).